Consider the following 131-residue polypeptide: Small ribosomal subunit protein bS6 (131 aa).

The segment at 98-131 (EASPMVKAKDERRERREDFANETADDSEAGDSEE) is disordered. The span at 104–116 (KAKDERRERREDF) shows a compositional bias: basic and acidic residues. Positions 120–131 (TADDSEAGDSEE) are enriched in acidic residues.

The protein belongs to the bacterial ribosomal protein bS6 family.

Functionally, binds together with bS18 to 16S ribosomal RNA. The sequence is that of Small ribosomal subunit protein bS6 from Klebsiella pneumoniae (strain 342).